The following is a 217-amino-acid chain: UPF0502 protein KPK_3478 (217 aa).

This sequence belongs to the UPF0502 family.

This chain is UPF0502 protein KPK_3478, found in Klebsiella pneumoniae (strain 342).